The following is a 638-amino-acid chain: Chaperone protein HtpG (638 aa).

The segment at 1–345 is a; substrate-binding; sequence MTTETFEFQV…AQDLSLNVSR (345 aa). The b stretch occupies residues 346–560; sequence EILQQDRHIR…AGELTPALEN (215 aa). Positions 561–638 are c; it reads MYRAMGQEVP…LMADRLERTL (78 aa).

The protein belongs to the heat shock protein 90 family. Homodimer.

The protein localises to the cytoplasm. Its function is as follows. Molecular chaperone. Has ATPase activity. The protein is Chaperone protein HtpG of Streptomyces coelicolor (strain ATCC BAA-471 / A3(2) / M145).